Reading from the N-terminus, the 482-residue chain is Cysteine--tRNA ligase (482 aa).

Residue Cys-29 participates in Zn(2+) binding. Positions 31 to 41 match the 'HIGH' region motif; sequence VTVYDYCHLGH. Zn(2+) contacts are provided by Cys-213, His-238, and Glu-242. Residues 275–279 carry the 'KMSKS' region motif; it reads KMSKS. Lys-278 contributes to the ATP binding site.

It belongs to the class-I aminoacyl-tRNA synthetase family. Monomer. The cofactor is Zn(2+).

Its subcellular location is the cytoplasm. It catalyses the reaction tRNA(Cys) + L-cysteine + ATP = L-cysteinyl-tRNA(Cys) + AMP + diphosphate. In Gloeobacter violaceus (strain ATCC 29082 / PCC 7421), this protein is Cysteine--tRNA ligase.